Here is a 137-residue protein sequence, read N- to C-terminus: Golgin subfamily A member 7 (137 aa).

2 S-palmitoyl cysteine lipidation sites follow: Cys-69 and Cys-72.

This sequence belongs to the ERF4 family. Interacts with GOLGA3. Interacts with ZDHHC9. Post-translationally, palmitoylated on Cys-69 and Cys-72; which is required for Golgi localization and interaction with GOLGA3.

The protein resides in the golgi apparatus membrane. Its function is as follows. May be involved in protein transport from Golgi to cell surface. The ZDHHC9-GOLGA7 complex is a palmitoyltransferase specific for HRAS and NRAS. The polypeptide is Golgin subfamily A member 7 (GOLGA7) (Bos taurus (Bovine)).